We begin with the raw amino-acid sequence, 365 residues long: Short-chain dehydrogenase iccH (365 aa).

Positions 16, 52, and 70 each coordinate NADP(+). N90 carries an N-linked (GlcNAc...) asparagine glycan. The NADP(+) site is built by N102, Y221, K225, and S260. Residue Y221 is the Proton donor of the active site. Residue K225 is the Lowers pKa of active site Tyr of the active site. Residues 267–287 (IWVMFLLMKFVLPLLAPLAVW) form a helical membrane-spanning segment. Residues N291 and N324 are each glycosylated (N-linked (GlcNAc...) asparagine).

This sequence belongs to the short-chain dehydrogenases/reductases (SDR) family.

Its subcellular location is the membrane. The protein operates within mycotoxin biosynthesis. In terms of biological role, NADH-dependent flavin oxidoreductase; part of the gene cluster that mediates the biosynthesis of ilicicolin H, a 4-hydroxy-2-pyridonealkaloid that has potent and broad antifungal activities by inhibiting the mitochondrial respiration chain. IccA to iccE are sufficient for ilicicolin H biosynthesis and the roles of the remaining enzymes, iccF, iccG and iccH within the pathway have still to be determined. The biosynthesis of ilicicolin H starts with formation of the tetramic acid by the hybrid PKS-NRPS synthetase iccA with the partnering trans-enoyl reductase iccB since iccA lacks a designated enoylreductase (ER) domain. The cytochrome P450 monooxygenase iccC then catalyzes the ring expansion of the tetramate to the acyclic 2-pyridone. The pericyclase iccD further converts the acyclic 2-pyridone into 8-epi-ilicicolin H. Finally, the epimerase iccE converts 8-epi-ilicicolin H into ilicicolin H via epimerizationd. This chain is Short-chain dehydrogenase iccH, found in Talaromyces variabilis (Penicillium variabile).